We begin with the raw amino-acid sequence, 233 residues long: Isoprenyl transferase (233 aa).

Aspartate 12 is a catalytic residue. Aspartate 12 provides a ligand contact to Mg(2+). Substrate is bound by residues 13 to 16 (GNGR), tryptophan 17, arginine 25, histidine 29, and 57 to 59 (STE). Catalysis depends on asparagine 60, which acts as the Proton acceptor. Substrate-binding positions include tryptophan 61, arginine 63, arginine 178, and 184 to 186 (RLS). A Mg(2+)-binding site is contributed by glutamate 197.

This sequence belongs to the UPP synthase family. Homodimer. The cofactor is Mg(2+).

Catalyzes the condensation of isopentenyl diphosphate (IPP) with allylic pyrophosphates generating different type of terpenoids. The sequence is that of Isoprenyl transferase from Thermotoga maritima (strain ATCC 43589 / DSM 3109 / JCM 10099 / NBRC 100826 / MSB8).